The primary structure comprises 64 residues: Large ribosomal subunit protein uL30 (64 aa).

The interval 1–22 (MAKAAKTIKVEQTGSAIRRHHS) is disordered.

Belongs to the universal ribosomal protein uL30 family. As to quaternary structure, part of the 50S ribosomal subunit.

The sequence is that of Large ribosomal subunit protein uL30 from Nitrobacter winogradskyi (strain ATCC 25391 / DSM 10237 / CIP 104748 / NCIMB 11846 / Nb-255).